We begin with the raw amino-acid sequence, 93 residues long: Defensin-like protein 210 (93 aa).

Positions 1 to 19 are cleaved as a signal peptide; sequence MKTIILFLTLLVISSSCTS. 3 cysteine pairs are disulfide-bonded: cysteine 63–cysteine 80, cysteine 66–cysteine 85, and cysteine 70–cysteine 87.

It belongs to the DEFL family.

It is found in the secreted. This is Defensin-like protein 210 from Arabidopsis thaliana (Mouse-ear cress).